The primary structure comprises 580 residues: YTH domain-containing family protein 2 (580 aa).

The tract at residues Met1 to Asn45 is disordered. The residue at position 2 (Ser2) is an N-acetylserine. Ser2, Ser4, Ser5, Ser22, Ser39, and Ser196 each carry phosphoserine. The tract at residues Ser2–Glu385 is localization to mRNA processing bodies (P-bodies). Positions Ala247–Pro388 are disordered. Residues Ala291–Pro317 are compositionally biased toward polar residues. Low complexity predominate over residues Ala338–Thr350. A Phosphoserine modification is found at Ser360. The segment covering Ser360 to Val372 has biased composition (gly residues). The span at Gly373–Ser384 shows a compositional bias: polar residues. The interaction with m6A-containing mRNAs stretch occupies residues Pro386–Lys580. Phosphoserine is present on Ser395. The region spanning Gly411–Ile545 is the YTH domain. RNA-binding positions include Lys417–Tyr419, Asp423, Trp433–Cys434, Asn463, Trp487, and Trp492.

This sequence belongs to the YTHDF family. YTHDF2 subfamily. In terms of assembly, interacts with CNOT1; interaction is direct and promotes recruitment of the CCR4-NOT complex. Interacts with YTHDF3. Interacts with RIDA/HRSP12; interaction leads to recruitment of the ribonuclease P/MRP complex. Ubiquitinated by the SCF(SKP2) complex, leading to its degradation.

Its subcellular location is the cytoplasm. It is found in the cytosol. It localises to the P-body. The protein localises to the stress granule. The protein resides in the nucleus. Its function is as follows. Specifically recognizes and binds N6-methyladenosine (m6A)-containing RNAs, and regulates their stability. M6A is a modification present at internal sites of mRNAs and some non-coding RNAs and plays a role in mRNA stability and processing. Acts as a regulator of mRNA stability by promoting degradation of m6A-containing mRNAs via interaction with the CCR4-NOT and ribonuclease P/MRP complexes, depending on the context. The YTHDF paralogs (YTHDF1, YTHDF2 and YTHDF3) share m6A-containing mRNAs targets and act redundantly to mediate mRNA degradation and cellular differentiation. M6A-containing mRNAs containing a binding site for RIDA/HRSP12 (5'-GGUUC-3') are preferentially degraded by endoribonucleolytic cleavage: cooperative binding of RIDA/HRSP12 and YTHDF2 to transcripts leads to recruitment of the ribonuclease P/MRP complex. Other m6A-containing mRNAs undergo deadenylation via direct interaction between YTHDF2 and CNOT1, leading to recruitment of the CCR4-NOT and subsequent deadenylation of m6A-containing mRNAs. Required maternally to regulate oocyte maturation: probably acts by binding to m6A-containing mRNAs, thereby regulating maternal transcript dosage during oocyte maturation, which is essential for the competence of oocytes to sustain early zygotic development. Also required during spermatogenesis: regulates spermagonial adhesion by promoting degradation of m6A-containing transcripts coding for matrix metallopeptidases. Also involved in hematopoietic stem cells specification by binding to m6A-containing mRNAs, leading to promote their degradation. Also acts as a regulator of neural development by promoting m6A-dependent degradation of neural development-related mRNA targets. Inhibits neural specification of induced pluripotent stem cells by binding to methylated neural-specific mRNAs and promoting their degradation, thereby restraining neural differentiation. Regulates circadian regulation of hepatic lipid metabolism: acts by promoting m6A-dependent degradation of PPARA transcripts. Regulates the innate immune response to infection by inhibiting the type I interferon response: acts by binding to m6A-containing IFNB transcripts and promoting their degradation. May also act as a promoter of cap-independent mRNA translation following heat shock stress: upon stress, relocalizes to the nucleus and specifically binds mRNAs with some m6A methylation mark at their 5'-UTR, protecting demethylation of mRNAs by FTO, thereby promoting cap-independent mRNA translation. Regulates mitotic entry by promoting the phase-specific m6A-dependent degradation of WEE1 transcripts. Promotes formation of phase-separated membraneless compartments, such as P-bodies or stress granules, by undergoing liquid-liquid phase separation upon binding to mRNAs containing multiple m6A-modified residues: polymethylated mRNAs act as a multivalent scaffold for the binding of YTHDF proteins, juxtaposing their disordered regions and thereby leading to phase separation. The resulting mRNA-YTHDF complexes then partition into different endogenous phase-separated membraneless compartments, such as P-bodies, stress granules or neuronal RNA granules. May also recognize and bind RNAs modified by C5-methylcytosine (m5C) and act as a regulator of rRNA processing. The polypeptide is YTH domain-containing family protein 2 (Bos taurus (Bovine)).